A 342-amino-acid polypeptide reads, in one-letter code: Dihydroorotase (342 aa).

Zn(2+)-binding residues include His13 and His15. Residues 15 to 17 (HLR) and Asn41 contribute to the substrate site. 3 residues coordinate Zn(2+): Lys97, His134, and His172. N6-carboxylysine is present on Lys97. Residue His134 coordinates substrate. Leu217 lines the substrate pocket. Position 245 (Asp245) interacts with Zn(2+). The active site involves Asp245. 2 residues coordinate substrate: His249 and Ala261.

It belongs to the metallo-dependent hydrolases superfamily. DHOase family. Class II DHOase subfamily. Homodimer. It depends on Zn(2+) as a cofactor.

The enzyme catalyses (S)-dihydroorotate + H2O = N-carbamoyl-L-aspartate + H(+). Its pathway is pyrimidine metabolism; UMP biosynthesis via de novo pathway; (S)-dihydroorotate from bicarbonate: step 3/3. Catalyzes the reversible cyclization of carbamoyl aspartate to dihydroorotate. The sequence is that of Dihydroorotase from Shewanella amazonensis (strain ATCC BAA-1098 / SB2B).